The following is a 512-amino-acid chain: Gamma-aminobutyric acid receptor subunit beta-2 (512 aa).

The N-terminal stretch at 1-25 (MWRVRKRGYFGIWSFPLIIAAVCAQ) is a signal peptide. Residues 26–241 (SVNDPSNMSL…LSLSFKLKRN (216 aa)) are Extracellular-facing. 2 N-linked (GlcNAc...) asparagine glycosylation sites follow: N32 and N104. Y121 contacts histamine. The cysteines at positions 160 and 174 are disulfide-linked. N-linked (GlcNAc...) asparagine glycosylation is present at N173. Histamine is bound by residues 180–181 (SY) and T226. 4-aminobutanoate contacts are provided by Y181 and T226. The chain crosses the membrane as a helical span at residues 242–262 (IGYFILQTYMPSILITILSWV). Over 263–272 (SFWINYDASA) the chain is Cytoplasmic. The chain crosses the membrane as a helical span at residues 273 to 292 (ARVALGITTVLTMTTINTHL). The Extracellular segment spans residues 293 to 310 (RETLPKIPYVKAIDMYLM). A helical membrane pass occupies residues 311–331 (GCFVFVFMALLEYALVNYIFF). Topologically, residues 332 to 490 (GRGPQRQKKA…LTDVNAIDRW (159 aa)) are cytoplasmic. Y441 is modified (phosphotyrosine). A helical membrane pass occupies residues 491–511 (SRIFFPVVFSFFNIVYWLYYV). Residue N512 is a topological domain, extracellular.

Belongs to the ligand-gated ion channel (TC 1.A.9) family. Gamma-aminobutyric acid receptor (TC 1.A.9.5) subfamily. GABRB2 sub-subfamily. As to quaternary structure, heteropentamer, formed by a combination of alpha (GABRA1-6), beta (GABRB1-3), gamma (GABRG1-3), delta (GABRD), epsilon (GABRE), rho (GABRR1-3), pi (GABRP) and theta (GABRQ) chains, each subunit exhibiting distinct physiological and pharmacological properties. Interacts with UBQLN1. May interact with KIF21B. Identified in a complex of 720 kDa composed of LHFPL4, NLGN2, GABRA1, GABRB2, GABRG2 and GABRB3. Isoform 1 and isoform 2 show reduced expression in schizophrenic brain. Isoform 3 shows increased expression in schizophrenic and bipolar disorder brains while isoform 4 shows reduced expression.

It is found in the postsynaptic cell membrane. It localises to the cell membrane. The protein resides in the cytoplasmic vesicle membrane. It catalyses the reaction chloride(in) = chloride(out). Allosterically activated by benzodiazepines. Allosterically activated by the anesthetic etomidate. Inhibited by the antagonist bicuculline. Potentiated by histamine. Its function is as follows. Beta subunit of the heteropentameric ligand-gated chloride channel gated by gamma-aminobutyric acid (GABA), a major inhibitory neurotransmitter in the brain. GABA-gated chloride channels, also named GABA(A) receptors (GABAAR), consist of five subunits arranged around a central pore and contain GABA active binding site(s) located at the alpha and beta subunit interface(s). When activated by GABA, GABAARs selectively allow the flow of chloride anions across the cell membrane down their electrochemical gradient. Chloride influx into the postsynaptic neuron following GABAAR opening decreases the neuron ability to generate a new action potential, thereby reducing nerve transmission. GABAARs containing alpha-1 and beta-2 or -3 subunits exhibit synaptogenic activity; the gamma-2 subunit being necessary but not sufficient to induce rapid synaptic contacts formation. Extrasynaptic beta-2 receptors contribute to the tonic GABAergic inhibition. Beta-containing GABAARs can simultaneously bind GABA and histamine where histamine binds at the interface of two neighboring beta subunits, which may be involved in the regulation of sleep and wakefulness. This is Gamma-aminobutyric acid receptor subunit beta-2 from Homo sapiens (Human).